The following is a 119-amino-acid chain: Holo-[acyl-carrier-protein] synthase (119 aa).

Mg(2+)-binding residues include Asp8 and Glu58.

Belongs to the P-Pant transferase superfamily. AcpS family. The cofactor is Mg(2+).

It is found in the cytoplasm. The catalysed reaction is apo-[ACP] + CoA = holo-[ACP] + adenosine 3',5'-bisphosphate + H(+). Its function is as follows. Transfers the 4'-phosphopantetheine moiety from coenzyme A to a Ser of acyl-carrier-protein. The protein is Holo-[acyl-carrier-protein] synthase of Bacillus thuringiensis subsp. konkukian (strain 97-27).